A 369-amino-acid chain; its full sequence is Fructose-bisphosphate aldolase 2 (369 aa).

Asp-40 is a dihydroxyacetone phosphate binding site. The D-glyceraldehyde 3-phosphate site is built by Ser-42 and Thr-45. Arg-49 contributes to the beta-D-fructose 1,6-bisphosphate binding site. Lys-113 lines the D-glyceraldehyde 3-phosphate pocket. Lys-152 provides a ligand contact to dihydroxyacetone phosphate. Glu-195 lines the D-glyceraldehyde 3-phosphate pocket. Glu-195 acts as the Proton acceptor in catalysis. Dihydroxyacetone phosphate is bound by residues Lys-237, Ser-279, and Gly-280. Lys-237 (schiff-base intermediate with dihydroxyacetone phosphate) is an active-site residue. Residues 279 to 281 (SGG) and Ser-307 contribute to the beta-D-fructose 1,6-bisphosphate site. Positions 309 and 310 each coordinate dihydroxyacetone phosphate. Arg-310 serves as a coordination point for beta-D-fructose 1,6-bisphosphate.

It belongs to the class I fructose-bisphosphate aldolase family.

It is found in the cytoplasm. The protein resides in the membrane. The protein localises to the host cell membrane. It catalyses the reaction beta-D-fructose 1,6-bisphosphate = D-glyceraldehyde 3-phosphate + dihydroxyacetone phosphate. It participates in carbohydrate degradation; glycolysis; D-glyceraldehyde 3-phosphate and glycerone phosphate from D-glucose: step 4/4. In terms of biological role, plays a key role in glycolysis by catalyzing the cleavage of fructose 1,6-bisphosphate into dihydroxyacetone phosphate and glyceraldehyde 3-phosphate. This chain is Fructose-bisphosphate aldolase 2 (ALDO2), found in Plasmodium berghei (strain Anka).